A 74-amino-acid polypeptide reads, in one-letter code: Pelophylaxin-2 (74 aa).

Residues 1-22 (MFTMKKSLLFFFFLGTIALSLC) form the signal peptide. Residues 23–42 (EEERGADEEENGAEITDEEV) constitute a propeptide that is removed on maturation. Cys68 and Cys74 are oxidised to a cystine.

In terms of tissue distribution, expressed by the skin glands.

Its subcellular location is the secreted. Functionally, antimicrobial peptide. This is Pelophylaxin-2 from Pelophylax fukienensis (Fukien gold-striped pond frog).